We begin with the raw amino-acid sequence, 141 residues long: 6,7-dimethyl-8-ribityllumazine synthase (141 aa).

5-amino-6-(D-ribitylamino)uracil is bound by residues Phe-11, 42-44 (ALE), and 66-68 (VVI). 71–72 (ET) provides a ligand contact to (2S)-2-hydroxy-3-oxobutyl phosphate. His-74 (proton donor) is an active-site residue. Asn-98 lines the 5-amino-6-(D-ribitylamino)uracil pocket. (2S)-2-hydroxy-3-oxobutyl phosphate is bound at residue Arg-112.

This sequence belongs to the DMRL synthase family.

It carries out the reaction (2S)-2-hydroxy-3-oxobutyl phosphate + 5-amino-6-(D-ribitylamino)uracil = 6,7-dimethyl-8-(1-D-ribityl)lumazine + phosphate + 2 H2O + H(+). Its pathway is cofactor biosynthesis; riboflavin biosynthesis; riboflavin from 2-hydroxy-3-oxobutyl phosphate and 5-amino-6-(D-ribitylamino)uracil: step 1/2. Functionally, catalyzes the formation of 6,7-dimethyl-8-ribityllumazine by condensation of 5-amino-6-(D-ribitylamino)uracil with 3,4-dihydroxy-2-butanone 4-phosphate. This is the penultimate step in the biosynthesis of riboflavin. This is 6,7-dimethyl-8-ribityllumazine synthase from Sphingopyxis alaskensis (strain DSM 13593 / LMG 18877 / RB2256) (Sphingomonas alaskensis).